A 143-amino-acid chain; its full sequence is Transcriptional regulator MraZ (143 aa).

SpoVT-AbrB domains follow at residues 5–47 (THSP…PIRE) and 76–119 (ASNE…DAQT).

Belongs to the MraZ family. Forms oligomers.

The protein localises to the cytoplasm. The protein resides in the nucleoid. The sequence is that of Transcriptional regulator MraZ from Thermobifida fusca (strain YX).